The primary structure comprises 359 residues: Lipopolysaccharide 1,6-galactosyltransferase (359 aa).

Q242 and E274 together coordinate UDP.

It belongs to the glycosyltransferase group 1 family. Glycosyltransferase 4 subfamily.

The enzyme catalyses alpha-D-Glc-(1-&gt;3)-[L-alpha-D-Hep-(1-&gt;7)]-4-O-PO3(2-)-L-alpha-D-Hep-(1-&gt;3)-4-O-PO3(2-)-L-alpha-D-Hep-(1-&gt;5)-[alpha-Kdo-(2-&gt;4)]-alpha-Kdo-(2-&gt;6)-lipid A + UDP-alpha-D-galactose = alpha-D-Gal-(1-&gt;6)-alpha-D-Glc-(1-&gt;3)-[L-alpha-D-Hep-(1-&gt;7)]-4-O-PO3(2-)-L-alpha-D-Hep-(1-&gt;3)-4-O-PO3(2-)-L-alpha-D-Hep-(1-&gt;5)-[alpha-Kdo-(2-&gt;4)]-alpha-Kdo-(2-&gt;6)-lipid A + UDP + H(+). It participates in bacterial outer membrane biogenesis; LPS core biosynthesis. Functionally, galactosyltransferase involved in the biosynthesis of the core oligosaccharide region of lipopolysaccharide (LPS). Catalyzes the addition of galactose from UDP-galactose to the first glucose residue of the LPS outer core. Cannot use other sugar donors, such as UDP-glucose, UDP-glucuronic acid, UDP-galacuronic acid, GDP-mannose, ADP-glucose and GDP-glucose. In the absence of a lipid acceptor, can hydrolyze UDP-galactose to UDP and galactose. This chain is Lipopolysaccharide 1,6-galactosyltransferase, found in Escherichia coli (strain K12).